The sequence spans 388 residues: Ferrochelatase (388 aa).

Fe cation contacts are provided by H196 and E277.

Belongs to the ferrochelatase family.

The protein resides in the cytoplasm. The catalysed reaction is heme b + 2 H(+) = protoporphyrin IX + Fe(2+). Its pathway is porphyrin-containing compound metabolism; protoheme biosynthesis; protoheme from protoporphyrin-IX: step 1/1. Its function is as follows. Catalyzes the ferrous insertion into protoporphyrin IX. The chain is Ferrochelatase from Nostoc punctiforme (strain ATCC 29133 / PCC 73102).